Reading from the N-terminus, the 549-residue chain is mRNA-capping enzyme subunit beta (549 aa).

Serine 2 is subject to N-acetylserine. Serine 15 carries the post-translational modification Phosphoserine. Residues 30 to 169 form a disordered region; that stretch reads LQKLSEAANG…QGNEGNIASN (140 aa). A compositionally biased stretch (acidic residues) spans 86–96; it reads DDEETDTDDEM. Phosphoserine is present on serine 124. The span at 135-157 shows a compositional bias: basic and acidic residues; it reads AKLEKPSDDSIHQNSKSDEEQRI. Residue lysine 223 is the N6-GMP-lysine intermediate of the active site.

This sequence belongs to the fungal TPase family. In terms of assembly, heterodimer. The mRNA-capping enzyme is composed of two separate chains alpha and beta, respectively a mRNA guanylyltransferase and an mRNA 5'-triphosphate monophosphatase. The cofactor is Mg(2+).

The protein localises to the nucleus. The catalysed reaction is a 5'-end triphospho-ribonucleoside in mRNA + H2O = a 5'-end diphospho-ribonucleoside in mRNA + phosphate + H(+). Functionally, first step of mRNA capping. Converts the 5'-triphosphate end of a nascent mRNA chain into a diphosphate end. The polypeptide is mRNA-capping enzyme subunit beta (CET1) (Saccharomyces cerevisiae (strain ATCC 204508 / S288c) (Baker's yeast)).